Reading from the N-terminus, the 299-residue chain is Ribosomal RNA small subunit methyltransferase H (299 aa).

Residues Gly36–His38, Asp55, Phe82, Asp97, and Gln104 each bind S-adenosyl-L-methionine.

This sequence belongs to the methyltransferase superfamily. RsmH family.

It is found in the cytoplasm. The enzyme catalyses cytidine(1402) in 16S rRNA + S-adenosyl-L-methionine = N(4)-methylcytidine(1402) in 16S rRNA + S-adenosyl-L-homocysteine + H(+). Its function is as follows. Specifically methylates the N4 position of cytidine in position 1402 (C1402) of 16S rRNA. The chain is Ribosomal RNA small subunit methyltransferase H from Synechococcus sp. (strain RCC307).